The primary structure comprises 120 residues: NAD(P)H-quinone oxidoreductase subunit 3, chloroplastic (120 aa).

3 helical membrane-spanning segments follow: residues 9–29 (IFWA…LISA), 64–84 (MFAL…PWAM), and 88–108 (VLGV…IVGL).

Belongs to the complex I subunit 3 family. NDH is composed of at least 16 different subunits, 5 of which are encoded in the nucleus.

The protein localises to the plastid. The protein resides in the chloroplast thylakoid membrane. The catalysed reaction is a plastoquinone + NADH + (n+1) H(+)(in) = a plastoquinol + NAD(+) + n H(+)(out). The enzyme catalyses a plastoquinone + NADPH + (n+1) H(+)(in) = a plastoquinol + NADP(+) + n H(+)(out). Functionally, NDH shuttles electrons from NAD(P)H:plastoquinone, via FMN and iron-sulfur (Fe-S) centers, to quinones in the photosynthetic chain and possibly in a chloroplast respiratory chain. The immediate electron acceptor for the enzyme in this species is believed to be plastoquinone. Couples the redox reaction to proton translocation, and thus conserves the redox energy in a proton gradient. This chain is NAD(P)H-quinone oxidoreductase subunit 3, chloroplastic, found in Citrus sinensis (Sweet orange).